Here is a 601-residue protein sequence, read N- to C-terminus: HMG domain-containing protein 4 (601 aa).

Lys8 participates in a covalent cross-link: Glycyl lysine isopeptide (Lys-Gly) (interchain with G-Cter in SUMO2). Disordered regions lie at residues 51 to 410 (VRNS…KKKN) and 473 to 514 (TTVK…ASPA). Residues 82 to 93 (DYYYGDISSLES) show a composition bias toward low complexity. A Phosphoserine modification is found at Ser102. A Glycyl lysine isopeptide (Lys-Gly) (interchain with G-Cter in SUMO2) cross-link involves residue Lys191. Residue Ser197 is modified to Phosphoserine. 2 stretches are compositionally biased toward polar residues: residues 212-221 (QYPSQQATVK) and 270-282 (DASQ…SANL). The segment covering 316–344 (IKKKKKSKKSKKKKDKEKHKEKRHSKSKR) has biased composition (basic residues). Basic and acidic residues predominate over residues 394–404 (EEKDKERERGE). A DNA-binding region (HMG box) is located at residues 407 to 475 (KKKNMSAYQV…KQNKAEATTV (69 aa)). Residues Ser497, Ser502, and Ser512 each carry the phosphoserine modification.

It is found in the nucleus. In terms of biological role, negatively regulates Wnt/beta-catenin signaling during development. The chain is HMG domain-containing protein 4 (HMGXB4) from Homo sapiens (Human).